Consider the following 511-residue polypeptide: 2-isopropylmalate synthase (511 aa).

A Pyruvate carboxyltransferase domain is found at 5–267 (LIIFDTTLRD…DTNIDTMHIL (263 aa)). 4 residues coordinate Mn(2+): aspartate 14, histidine 202, histidine 204, and asparagine 238. The regulatory domain stretch occupies residues 393–511 (KLVSLKVCTE…TVTNKAHPQI (119 aa)).

It belongs to the alpha-IPM synthase/homocitrate synthase family. LeuA type 1 subfamily. In terms of assembly, homodimer. The cofactor is Mn(2+).

The protein localises to the cytoplasm. The enzyme catalyses 3-methyl-2-oxobutanoate + acetyl-CoA + H2O = (2S)-2-isopropylmalate + CoA + H(+). The protein operates within amino-acid biosynthesis; L-leucine biosynthesis; L-leucine from 3-methyl-2-oxobutanoate: step 1/4. Its function is as follows. Catalyzes the condensation of the acetyl group of acetyl-CoA with 3-methyl-2-oxobutanoate (2-ketoisovalerate) to form 3-carboxy-3-hydroxy-4-methylpentanoate (2-isopropylmalate). This Vesicomyosocius okutanii subsp. Calyptogena okutanii (strain HA) protein is 2-isopropylmalate synthase.